A 234-amino-acid polypeptide reads, in one-letter code: Chalcone--flavanone isomerase 1 (234 aa).

The substrate site is built by Thr-50, Asn-115, and Ser-192.

The protein belongs to the chalcone isomerase family.

It carries out the reaction a chalcone = a flavanone.. The protein operates within secondary metabolite biosynthesis; flavonoid biosynthesis. In terms of biological role, catalyzes the intramolecular cyclization of bicyclic chalcones into tricyclic (S)-flavanones. Responsible for the isomerization of 4,2',4',6'-tetrahydroxychalcone (also termed chalcone) into naringenin. The chain is Chalcone--flavanone isomerase 1 (CHI1) from Vitis vinifera (Grape).